We begin with the raw amino-acid sequence, 291 residues long: Geranyl diphosphate 2-C-methyltransferase (291 aa).

It belongs to the geranyl diphosphate 2-C-methyltransferase family. It depends on Mg(2+) as a cofactor.

It carries out the reaction (2E)-geranyl diphosphate + S-adenosyl-L-methionine = (E)-2-methylgeranyl diphosphate + S-adenosyl-L-homocysteine + H(+). Catalyzes the SAM-dependent methylation of geranyl diphosphate (GPP) to yield (E)-2-methylgeranyl diphosphate (2-MeGPP). In Streptomyces ambofaciens (strain ATCC 23877 / 3486 / DSM 40053 / JCM 4204 / NBRC 12836 / NRRL B-2516), this protein is Geranyl diphosphate 2-C-methyltransferase.